Consider the following 194-residue polypeptide: Peptidyl-tRNA hydrolase (194 aa).

H22 (proton acceptor) is an active-site residue. TRNA is bound by residues Y67, N69, and N115.

The protein belongs to the PTH family. As to quaternary structure, monomer.

It localises to the cytoplasm. The catalysed reaction is an N-acyl-L-alpha-aminoacyl-tRNA + H2O = an N-acyl-L-amino acid + a tRNA + H(+). In terms of biological role, hydrolyzes ribosome-free peptidyl-tRNAs (with 1 or more amino acids incorporated), which drop off the ribosome during protein synthesis, or as a result of ribosome stalling. Functionally, catalyzes the release of premature peptidyl moieties from peptidyl-tRNA molecules trapped in stalled 50S ribosomal subunits, and thus maintains levels of free tRNAs and 50S ribosomes. This Granulibacter bethesdensis (strain ATCC BAA-1260 / CGDNIH1) protein is Peptidyl-tRNA hydrolase.